A 140-amino-acid chain; its full sequence is Endoribonuclease YbeY (140 aa).

Residues histidine 100, histidine 104, and histidine 110 each coordinate Zn(2+).

This sequence belongs to the endoribonuclease YbeY family. Requires Zn(2+) as cofactor.

It localises to the cytoplasm. Its function is as follows. Single strand-specific metallo-endoribonuclease involved in late-stage 70S ribosome quality control and in maturation of the 3' terminus of the 16S rRNA. The sequence is that of Endoribonuclease YbeY from Helicobacter pylori (strain ATCC 700392 / 26695) (Campylobacter pylori).